The sequence spans 321 residues: uncharacterized protein (321 aa).

28–35 (GPINSGKT) contributes to the ATP binding site.

It belongs to the archaeal ATPase family.

This is an uncharacterized protein from Pyrococcus horikoshii (strain ATCC 700860 / DSM 12428 / JCM 9974 / NBRC 100139 / OT-3).